Here is a 54-residue protein sequence, read N- to C-terminus: Large ribosomal subunit protein bL33A (54 aa).

It belongs to the bacterial ribosomal protein bL33 family.

The polypeptide is Large ribosomal subunit protein bL33A (Mesoplasma florum (strain ATCC 33453 / NBRC 100688 / NCTC 11704 / L1) (Acholeplasma florum)).